The chain runs to 732 residues: E3 ubiquitin-protein ligase DCST1 (732 aa).

Residues 1–46 (MAFLSSTLHSLGIFEKISRIKEVLKNRLLDLTKRRDQAREQQRKRP) lie on the Cytoplasmic side of the membrane. The helical transmembrane segment at 47-67 (HTIIQGLLLWSLPVSWIRFLW) threads the bilayer. The Extracellular segment spans residues 68-76 (RQPGEFPVT). The chain crosses the membrane as a helical span at residues 77-97 (AFLLGAGTGGLLAIGLFQLLV). The Cytoplasmic segment spans residues 98-107 (NPMNIYEEQK). A helical transmembrane segment spans residues 108–128 (VVALYCLASLGAIGWGTSPHI). The Extracellular segment spans residues 129–394 (RCASLLLVPK…VRDYVRQQET (266 aa)). N-linked (GlcNAc...) asparagine glycans are attached at residues Asn-184, Asn-217, Asn-346, and Asn-374. A helical membrane pass occupies residues 395–415 (YLQWAMGLLHVLLSCTFLLVF). The Cytoplasmic portion of the chain corresponds to 416-489 (HSAFSYMDHY…RYVIRELLET (74 aa)). The helical transmembrane segment at 490 to 510 (LPIVLLLLVLCAIDWALYSVF) threads the bilayer. Residues 511-576 (DTIRQHSFVQ…PQPISLNARD (66 aa)) lie on the Extracellular side of the membrane. A glycan (N-linked (GlcNAc...) asparagine) is linked at Asn-551. The helical transmembrane segment at 577–597 (YFKASLPTLLLVCLCLAQAFG) threads the bilayer. Residues 598-732 (YRLRRVIAAF…DSNDDAVYGD (135 aa)) are Cytoplasmic-facing. Residues 672 to 711 (CVVCQAMETPDSYVCPTPDCKALYCRSCWDDMQRLCPVCT) form an RING-type; degenerate zinc finger.

Interacts with STAT2; the interaction results in STAT2 'Lys-48'-linked ubiquitination leading to its proteasomal degradation. Interacts with DCST2. As to expression, expressed in testis.

It localises to the cell membrane. Its subcellular location is the cytoplasmic vesicle. The protein localises to the secretory vesicle. The protein resides in the acrosome membrane. The enzyme catalyses S-ubiquitinyl-[E2 ubiquitin-conjugating enzyme]-L-cysteine + [acceptor protein]-L-lysine = [E2 ubiquitin-conjugating enzyme]-L-cysteine + N(6)-ubiquitinyl-[acceptor protein]-L-lysine.. It participates in protein modification; protein ubiquitination. Functionally, E3 ubiquitin-protein ligase which mediates 'Lys-48'-linked ubiquitination of STAT2 and induces its proteasomal degradation thereby negatively regulating type-I-interferon signaling. Essential sperm cell-surface protein required for sperm-egg fusion and fertilization. The protein is E3 ubiquitin-protein ligase DCST1 (Dcst1) of Mus musculus (Mouse).